The following is a 236-amino-acid chain: Lipoprotein B (236 aa).

The signal sequence occupies residues 1 to 27 (MNKKYFKKYSSILIFSMSILAPMTLAS). C28 carries N-palmitoyl cysteine lipidation. C28 is lipidated: S-diacylglycerol cysteine. 2 disordered regions span residues 35–112 (EKDK…KSNV) and 134–236 (SEKQ…GDAF). Residues 43–60 (STNLSEPNKSNTSKTNTF) are compositionally biased toward polar residues. The segment covering 61–74 (QDKKDSTNKIDSQE) has biased composition (basic and acidic residues). 2 stretches are compositionally biased toward polar residues: residues 75–112 (SSKTQSQNTSESNQNTKVDSSKTNNLATNQNNPSKSNV) and 143–157 (NASSLNSKQINNTLK). A compositionally biased stretch (basic and acidic residues) spans 158–175 (NQDKTKQENDQFKQESKD). Residues 193-212 (VISSQSTTRLEMPKNDQSNS) are compositionally biased toward polar residues. Basic and acidic residues predominate over residues 215–228 (EDNKKSPESPKWWE).

It belongs to the M.pulmonis LipAB lipoprotein family.

It localises to the cell membrane. The chain is Lipoprotein B (lipB) from Mycoplasmopsis pulmonis (strain UAB CTIP) (Mycoplasma pulmonis).